A 135-amino-acid chain; its full sequence is uncharacterized protein (135 aa).

2 helical membrane passes run 11 to 31 (ILFFGLAFILVGFGLILGYLI) and 57 to 77 (LGTAAAVAGGVIAGELITDAI).

Its subcellular location is the cell membrane. This is an uncharacterized protein from Methanocaldococcus jannaschii (strain ATCC 43067 / DSM 2661 / JAL-1 / JCM 10045 / NBRC 100440) (Methanococcus jannaschii).